We begin with the raw amino-acid sequence, 266 residues long: Large ribosomal subunit protein eL8 (266 aa).

Glycyl lysine isopeptide (Lys-Gly) (interchain with G-Cter in SUMO2) cross-links involve residues Lys-11, Lys-20, and Lys-21. Lys-34 carries the post-translational modification N6-acetyllysine. Lys-48 participates in a covalent cross-link: Glycyl lysine isopeptide (Lys-Gly) (interchain with G-Cter in SUMO2). The residue at position 97 (Lys-97) is an N6-acetyllysine; alternate. Residue Lys-97 forms a Glycyl lysine isopeptide (Lys-Gly) (interchain with G-Cter in SUMO2); alternate linkage. Residue Lys-125 forms a Glycyl lysine isopeptide (Lys-Gly) (interchain with G-Cter in SUMO2) linkage. Lys-217 is modified (N6-acetyllysine). Residue Lys-245 forms a Glycyl lysine isopeptide (Lys-Gly) (interchain with G-Cter in SUMO2) linkage.

Belongs to the eukaryotic ribosomal protein eL8 family. In terms of assembly, component of the large ribosomal subunit. Interacts with CRY1. Interacts with DICER1, AGO2, TARBP2, MOV10 and EIF6; they form a large RNA-induced silencing complex (RISC).

The protein localises to the cytoplasm. Functionally, component of the large ribosomal subunit. The ribosome is a large ribonucleoprotein complex responsible for the synthesis of proteins in the cell. The sequence is that of Large ribosomal subunit protein eL8 (Rpl7a) from Rattus norvegicus (Rat).